Reading from the N-terminus, the 100-residue chain is NADH-quinone oxidoreductase subunit K (100 aa).

Helical transmembrane passes span 4-24 (LSHG…SLVM), 28-48 (ILFM…ALVV), and 60-80 (IMYI…LALL).

This sequence belongs to the complex I subunit 4L family. As to quaternary structure, NDH-1 is composed of 13 different subunits. Subunits NuoA, H, J, K, L, M, N constitute the membrane sector of the complex.

It is found in the cell membrane. It carries out the reaction a quinone + NADH + 5 H(+)(in) = a quinol + NAD(+) + 4 H(+)(out). Its function is as follows. NDH-1 shuttles electrons from NADH, via FMN and iron-sulfur (Fe-S) centers, to quinones in the respiratory chain. The immediate electron acceptor for the enzyme in this species is believed to be ubiquinone. Couples the redox reaction to proton translocation (for every two electrons transferred, four hydrogen ions are translocated across the cytoplasmic membrane), and thus conserves the redox energy in a proton gradient. The polypeptide is NADH-quinone oxidoreductase subunit K (Buchnera aphidicola subsp. Baizongia pistaciae (strain Bp)).